Consider the following 326-residue polypeptide: Phosphate acyltransferase (326 aa).

It belongs to the PlsX family. As to quaternary structure, homodimer. Probably interacts with PlsY.

The protein resides in the cytoplasm. It catalyses the reaction a fatty acyl-[ACP] + phosphate = an acyl phosphate + holo-[ACP]. The protein operates within lipid metabolism; phospholipid metabolism. Functionally, catalyzes the reversible formation of acyl-phosphate (acyl-PO(4)) from acyl-[acyl-carrier-protein] (acyl-ACP). This enzyme utilizes acyl-ACP as fatty acyl donor, but not acyl-CoA. The sequence is that of Phosphate acyltransferase from Thermus thermophilus (strain ATCC BAA-163 / DSM 7039 / HB27).